Here is a 131-residue protein sequence, read N- to C-terminus: Global transcriptional regulator Spx (131 aa).

A CXXC motif is present at residues 10-13; that stretch reads CTSC. The cysteines at positions 10 and 13 are disulfide-linked.

It belongs to the ArsC family. Spx subfamily. Interacts with the C-terminal domain of the alpha subunit of the RNAP. A single Spx monomer interacts with RNAP to form the transcription activation complex. Interacts with the adapter protein SpxH/YjbH.

Its subcellular location is the cytoplasm. With respect to regulation, under non-stress conditions, Spx is degraded by ClpXP and, to a lesser extent, by ClpCP. Efficient dedradation by ClpXP requires the adapter protein SpxH/YjbH. Binding to SpxH/YjbH reduces the overall conformational flexibility of Spx and stabilizes the C-terminal ClpX recognition region of Spx. In addition, activity is modulated by the formation of a disulfide bound within the N-terminal Cys-X-X-Cys (CXXC) motif, which is required for the transcriptional activation of trxA and trxB, or for the activation of msrAB operon expression following paraquat oxidative stress. However, it seems that formation of the disulfide bound is not essential for induction of all Spx-controlled genes, as for example the case of BSH biosynthesis genes. Similarly, induction of the Spx regulon during cell wall stress is not accompanied by oxidation of the disulfide switch, but requires Spx stabilization by the anti-adapter protein SpxO/YirB. Functionally, global transcriptional regulator that plays a key role in stress response and exerts either positive or negative regulation of genes. Acts by interacting with the C-terminal domain of the alpha subunit of the RNA polymerase (RNAP). This interaction can enhance binding of RNAP to the promoter region of target genes and stimulate their transcription, or block interaction of RNAP with activator proteins and repress transcription. Exhibits no DNA-binding activity. Its function is as follows. Induces the expression of a large number of genes in response to a variety of stress conditions, such as disulfide, heat and cell wall stress, while concurrently repressing transcription of genes involved in various developmental and growth-related pathways during periods of extreme stress. Functions in the oxidative stress response via induction of the transcription of thioredoxin (trxA) and thioredoxin reductase (trxB) during thiol-specific oxidative (disulfide) stress. Mediates response to oxidative stress caused by paraquat (PQ) via induction of the methionine sulfoxide reductase genes, msrA and msrB. Also acts as a transcriptional activator of the bacillithiol (BSH) biosynthesis genes in response to oxidizing conditions and thio-reactive compounds. Involved in heat stress response and thermotolerance development, which results in diminished cellular protein aggregates. Plays an important adaptive role in the cell wall stress response. Participates in sulfate-dependent control of organosulfur metabolism. Negatively controls, via CymR, the expression of the organosulfur utilization operons ytmI, yxeI and ssu, and directly activates yrrT operon expression during growth in medium containing methionine as sole sulfur source. Negatively affects competence and sporulation. Inhibits biofilm formation in response to disulfide stress by repressing biofilm matrix genes. The protein is Global transcriptional regulator Spx of Bacillus subtilis (strain 168).